Consider the following 949-residue polypeptide: MTELPKAYEAKKIDEKWYQFWDAKRYFTANPLSNKPTYCIVIPPPNVTGVLHMGHALVNTVQDILIRWKRMLGFETLWVPGTDHAGIATQMVVERHLIKTEGKKRTDYTREEFLKHVWTWKEKSENRIIEQLKRLGNSCDWTRLRFTMDENNSLAVRTMFKKLFDDGLIYRGDYLVNWDPHTQTALADDEVEYEDKQSFLWYFKYPLRDESEFISIATTRPETMLGDTAVAVSPNDERFKHLIGKEIRLPLMNRLIPIIADHHVDPSFGTGVVKITPAHDPNDYQIGLSHRLPFINIMTPDGKINENGGHFQGLSMTEARHAVVSEMKEKGLLEKVEPHLNRVGISYRSKAIIEPYLSKQWFVKMDGFSKKLREVVQNGQVKLIPSHWESTYFHWIDNLRDWCISRQLWWGHRIPIWYHKEDSNRLICYAGSDLPDEVKNAPEEWIQDSDVLDTWFSSALWPFSTLGWPEQTSELAKFYPTSVLVTGHDILFFWVARMILMGDYALDQPPFPETYLLGLIYGKSYWRQESNGGILYVNEQERSDFDMGKPIPKEVFSKWEKMSKSKGNIIDPLEMIDQFGTDAVRMALCASATQARQIDLDRRRFEEFKNFTNKIWNGARFVLMNLDGNEQNRTMSLTSQGFSQGLDEALFTLEDRWILSVLNRTVESVNVHLNHYQFDQAAIEAYDFFWKEFCAYYVEIAKPILFGKIGTAQERTNKQKLLVIVLCQAIRLIHPMAPFITEELFHILKERLEGVEALTNADPYTKECIQALQSSACLVAPYPVRIGEKNQKVEAVFALMEQIVYTIRNIRGEMKLSPGTATDVYIIGQADDPEWQSAREHITMISALVKTRRILVETEEPKIGFACTGVYHALKIQLPLPEELLKQEKTRLNKEQEKLEISLEKLKNQLSNTDFVRRAPAHLTEKQNQQLSQTEQELREIKEKLMTLP.

A 'HIGH' region motif is present at residues 45 to 55 (PNVTGVLHMGH). The 'KMSKS' region motif lies at 561 to 565 (KMSKS). Residue K564 coordinates ATP. Residues 882 to 949 (EELLKQEKTR…EIKEKLMTLP (68 aa)) are a coiled coil.

Belongs to the class-I aminoacyl-tRNA synthetase family. ValS type 1 subfamily. In terms of assembly, monomer.

It localises to the cytoplasm. The enzyme catalyses tRNA(Val) + L-valine + ATP = L-valyl-tRNA(Val) + AMP + diphosphate. Its function is as follows. Catalyzes the attachment of valine to tRNA(Val). As ValRS can inadvertently accommodate and process structurally similar amino acids such as threonine, to avoid such errors, it has a 'posttransfer' editing activity that hydrolyzes mischarged Thr-tRNA(Val) in a tRNA-dependent manner. The chain is Valine--tRNA ligase from Protochlamydia amoebophila (strain UWE25).